Reading from the N-terminus, the 209-residue chain is Dual specificity protein phosphatase 22 (209 aa).

The Tyrosine-protein phosphatase domain occupies 4–144 (GMNKILTGLF…LEDFGKCEVH (141 aa)). C88 functions as the Phosphocysteine intermediate in the catalytic mechanism. Residues 169 to 192 (LDKHKQQEAAESQNATSSGRQWNS) form a disordered region. A compositionally biased stretch (polar residues) spans 177–190 (AAESQNATSSGRQW).

The protein belongs to the protein-tyrosine phosphatase family. Non-receptor class dual specificity subfamily.

Its subcellular location is the cytoplasm. The protein localises to the nucleus. It catalyses the reaction O-phospho-L-tyrosyl-[protein] + H2O = L-tyrosyl-[protein] + phosphate. The catalysed reaction is O-phospho-L-seryl-[protein] + H2O = L-seryl-[protein] + phosphate. The enzyme catalyses O-phospho-L-threonyl-[protein] + H2O = L-threonyl-[protein] + phosphate. Activates the Jnk signaling pathway. Dephosphorylates and deactivates p38 and stress-activated protein kinase/c-Jun N-terminal kinase (SAPK/JNK). This Xenopus laevis (African clawed frog) protein is Dual specificity protein phosphatase 22 (dusp22).